We begin with the raw amino-acid sequence, 558 residues long: MLRNTSRVLMSHFARANIPTPVNQPMLNYEVGSTHRKLLKEACAKFRNTTIDIPCVVGGKEIRTGDVQKQLICSDHNKVLATFHQANAELLKLAVENSMESKAQWESLPFEARSAVFLKAADLLNTKYRYDVLASTMLGQGKTVWQAEIDAAAEGIDFLRFNVKYAQEIYQQQPPANSAGCWNILTYQPLEGYVVAISPFNFTAIGLNLSSAPALMGNVVLWKPASTAVLSNWIVYKALLEAGLPAGVIQFLPGSGRLVGEHLFNNRNFSGLHFTGSTGVFNDIYKKTADNLVAGVYKGYPRIVGETGGKDFHFLHNSGDVENFVNNTLRGAFEYQGQKCSACSRAYIPQSLWPQIKDRLVTGVKSMKMGQSDDFSSFVSAVIDKNSFNNIQSYIEHAKASPDAEIIVGGKCDSSVGWFVEPTIILAKDPHYKSMEEEIFGPVLTIYVYEDSKFEETLKICDETSPYALTGSIFSTCRYAIETAHKYLKNAAGNFYINDKCTGAVVGQQPFGGSRASGTNDKAGSSLNLLRWISARTIKENFVPLTSFTYPYMIDPEN.

NAD(+)-binding positions include Ser-198, Lys-223, and Gly-276 to Val-280. Residue Glu-306 is the Proton acceptor of the active site. The Nucleophile role is filled by Cys-340. Glu-438 is an NAD(+) binding site.

It belongs to the aldehyde dehydrogenase family.

The protein localises to the mitochondrion matrix. The catalysed reaction is L-glutamate 5-semialdehyde + NAD(+) + H2O = L-glutamate + NADH + 2 H(+). It participates in amino-acid degradation; L-proline degradation into L-glutamate; L-glutamate from L-proline: step 2/2. In terms of biological role, irreversible conversion of delta-1-pyrroline-5-carboxylate (P5C), derived either from proline or ornithine, to glutamate. This is a necessary step in the pathway interconnecting the urea and tricarboxylic acid cycles. This chain is Delta-1-pyrroline-5-carboxylate dehydrogenase, mitochondrial, found in Dictyostelium discoideum (Social amoeba).